Reading from the N-terminus, the 384-residue chain is Prokineticin receptor 2 (384 aa).

Over 1-53 (MAAQNGNASFPANFSIPQEHASSLPFNFSYDDYDLPLDEDEDMTKTQTFFAAK) the chain is Extracellular. N7, N13, and N27 each carry an N-linked (GlcNAc...) asparagine glycan. A helical transmembrane segment spans residues 54 to 74 (IVIGVALVGIMLTCGIGNFVF). At 75 to 89 (ITALTRYKKLRNLTN) the chain is on the cytoplasmic side. A helical transmembrane segment spans residues 90-110 (LLIANLAISDFLVAIICCPFE). Residues 111–137 (MDYYVVHQLSWEHGHVLCACINYLRTV) are Extracellular-facing. C128 and C208 form a disulfide bridge. The chain crosses the membrane as a helical span at residues 138–158 (SLYVSTNALLAIAIDRYLAIV). Topologically, residues 159-171 (HPLKPRMNYQTAS) are cytoplasmic. The helical transmembrane segment at 172 to 192 (FLIALVWMVSILISIPSAYFT) threads the bilayer. Residues 193–223 (KETVLFIVKNQKKIFCGQVWPVDQQLYYKSY) are Extracellular-facing. The helical transmembrane segment at 224–244 (FLFVFGIEFLGPVFTMTLCYA) threads the bilayer. Residues 245 to 273 (RISRELWFKAVPGFQTEQIRKRLRCRRKT) lie on the Cytoplasmic side of the membrane. The chain crosses the membrane as a helical span at residues 274–294 (VLVLMCILTAYVLCWAPFYGF). Residues 295–313 (TIVRDFFPTVFVKEKHYLT) are Extracellular-facing. The chain crosses the membrane as a helical span at residues 314–334 (AFYVVECIAMSNSMINTVCFV). Topologically, residues 335 to 384 (TVKNSTMKYFKKMLLLHWRPSHHGSKSSADLDLKTSRLPATEEVDCIRLK) are cytoplasmic.

Belongs to the G-protein coupled receptor 1 family. As to quaternary structure, homodimer.

It is found in the cell membrane. Its function is as follows. Receptor for prokineticin 2. Exclusively coupled to the G(q) subclass of heteromeric G proteins. Activation leads to mobilization of calcium, stimulation of phosphoinositide turnover and activation of p44/p42 mitogen-activated protein kinase. This Bos taurus (Bovine) protein is Prokineticin receptor 2 (PROKR2).